The chain runs to 300 residues: Ankyrin repeat domain-containing protein 54 (300 aa).

The segment at 1-27 (MAAAAGDADDEPRSGHSSSEGECAVAP) is disordered. Residue Ala2 is modified to N-acetylalanine. A phosphoserine mark is found at Ser58 and Ser63. Positions 99–117 (RRLGPTGKEVHALKRLRDS) match the Nuclear localization signal (NLS) motif. 4 ANK repeats span residues 109-138 (HALK…DPCA), 142-171 (KGRT…DPNQ), 175-204 (LGNT…RVDA), and 208-244 (AGRT…IIHM). Residues 141–241 (DKGRTALHFA…EAVRLEVKQI (101 aa)) are LYN-binding. The Nuclear export signal (NES) motif lies at 283–293 (LLASFTSLSLQ).

Interacts (via ankyrin repeat region) with LYN (via SH3-domain) in an activation-independent status of LYN. Forms a multiprotein complex with LYN and HCLS1. Interacts with TSN2, VAV1, DBNL and LASP1.

Its subcellular location is the nucleus. The protein resides in the cytoplasm. The protein localises to the midbody. In terms of biological role, plays an important role in regulating intracellular signaling events associated with erythroid terminal differentiation. The protein is Ankyrin repeat domain-containing protein 54 (ANKRD54) of Homo sapiens (Human).